We begin with the raw amino-acid sequence, 456 residues long: Bifunctional protein GlmU (456 aa).

The interval 1–229 is pyrophosphorylase; it reads MYNCAIILAA…FEETMGVNSR (229 aa). Residues 8-11, Lys-22, Gln-73, and 78-79 contribute to the UDP-N-acetyl-alpha-D-glucosamine site; these read LAAG and GT. Asp-103 is a Mg(2+) binding site. UDP-N-acetyl-alpha-D-glucosamine is bound by residues Gly-140, Glu-155, Asn-170, and Asn-227. Asn-227 lines the Mg(2+) pocket. The linker stretch occupies residues 230–250; sequence VQLAEAEKIMRNRINKIHMEN. The tract at residues 251-456 is N-acetyltransferase; sequence GVTLIDHNNT…SWVYKKGLKK (206 aa). Residues Arg-332 and Lys-350 each contribute to the UDP-N-acetyl-alpha-D-glucosamine site. His-362 serves as the catalytic Proton acceptor. Tyr-365 and Asn-376 together coordinate UDP-N-acetyl-alpha-D-glucosamine. Acetyl-CoA is bound by residues 385-386, Ala-422, and Arg-439; that span reads NY.

This sequence in the N-terminal section; belongs to the N-acetylglucosamine-1-phosphate uridyltransferase family. It in the C-terminal section; belongs to the transferase hexapeptide repeat family. Homotrimer. It depends on Mg(2+) as a cofactor.

The protein localises to the cytoplasm. It catalyses the reaction alpha-D-glucosamine 1-phosphate + acetyl-CoA = N-acetyl-alpha-D-glucosamine 1-phosphate + CoA + H(+). The catalysed reaction is N-acetyl-alpha-D-glucosamine 1-phosphate + UTP + H(+) = UDP-N-acetyl-alpha-D-glucosamine + diphosphate. The protein operates within nucleotide-sugar biosynthesis; UDP-N-acetyl-alpha-D-glucosamine biosynthesis; N-acetyl-alpha-D-glucosamine 1-phosphate from alpha-D-glucosamine 6-phosphate (route II): step 2/2. It functions in the pathway nucleotide-sugar biosynthesis; UDP-N-acetyl-alpha-D-glucosamine biosynthesis; UDP-N-acetyl-alpha-D-glucosamine from N-acetyl-alpha-D-glucosamine 1-phosphate: step 1/1. Its pathway is bacterial outer membrane biogenesis; LPS lipid A biosynthesis. Its function is as follows. Catalyzes the last two sequential reactions in the de novo biosynthetic pathway for UDP-N-acetylglucosamine (UDP-GlcNAc). The C-terminal domain catalyzes the transfer of acetyl group from acetyl coenzyme A to glucosamine-1-phosphate (GlcN-1-P) to produce N-acetylglucosamine-1-phosphate (GlcNAc-1-P), which is converted into UDP-GlcNAc by the transfer of uridine 5-monophosphate (from uridine 5-triphosphate), a reaction catalyzed by the N-terminal domain. The protein is Bifunctional protein GlmU of Clostridium kluyveri (strain NBRC 12016).